The sequence spans 2764 residues: MDVKDRRHRSLTRGRCGKECRYTSSSLDSEDCRVPTQKSYSSSETLKAYDHDSRMHYGNRVTDLVHRESDEFSRQGTNFTLAELGICEPSPHRSGYCSDMGILHQGYSLSTGSDADSDTEGGMSPEHAIRLWGRGIKSRRSSGLSSRENSALTLTDSDNENKSDDDNGRPIPPTSSSSLLPSAQLPSSHNPPPVSCQMPLLDSNTSHQIMDTNPDEEFSPNSYLLRACSGPQQASSSGPPNHHSQSTLRPPLPPPHNHTLSHHHSSANSLNRNSLTNRRSQIHAPAPAPNDLATTPESVQLQDSWVLNSNVPLETRHFLFKTSSGSTPLFSSSSPGYPLTSGTVYTPPPRLLPRNTFSRKAFKLKKPSKYCSWKCAALSAIAAALLLAILLAYFIAMHLLGLNWQLQPADGHTFNNGVRTGLPGNDDVATVPSGGKVPWSLKNSSIDSGEAEVGRRVTQEVPPGVFWRSQIHISQPQFLKFNISLGKDALFGVYIRRGLPPSHAQYDFMERLDGKEKWSVVESPRERRSIQTLVQNEAVFVQYLDVGLWHLAFYNDGKDKEMVSFNTVVLDSVQDCPRNCHGNGECVSGLCHCFPGFLGADCAKAACPVLCSGNGQYSKGTCQCYSGWKGAECDVPMNQCIDPSCGGHGSCIDGNCVCAAGYKGEHCEEVDCLDPTCSSHGVCVNGECLCSPGWGGLNCELARVQCPDQCSGHGTYLPDSGLCSCDPNWMGPDCSVVCSVDCGTHGVCIGGACRCEEGWTGAACDQRVCHPRCIEHGTCKDGKCECREGWNGEHCTIDGCPDLCNGNGRCTLGQNSWQCVCQTGWRGPGCNVAMETSCADNKDNEGDGLVDCLDPDCCLQSACQNSLLCRGSRDPLDIIQQGQTDWPAVKSFYDRIKLLAGKDSTHIIPGDNPFNSSLVSLIRGQVVTMDGTPLVGVNVSFVKYPKYGYTITRQDGTFDLIANGGSALTLHFERAPFMSQERTVWLPWNSFYAMDTLVMKTEENSIPSCDLSGFVRPDPIIISSPLSTFFSASPASNPIVPETQVLHEEIELPGTNVKLRYLSSRTAGYKSLLKITMTQSTVPLNLIRVHLMVAVEGHLFQKSFQASPNLAYTFIWDKTDAYGQRVYGLSDAVVSVGFEYETCPSLILWEKRTALLQGFELDPSNLGGWSLDKHHTLNVKSGILHKGTGENQFLTQQPAIITSIMGNGRRRSISCPSCNGLAEGNKLLAPVALAVGIDGSLFVGDFNYIRRIFPSRNVTSILELRNKEFKHSNSPGHKYYLAVDPVTGSLYVSDTNSRRIYRVKSLSGAKDLAGNSEVVAGTGEQCLPFDEARCGDGGKAVDATLMSPRGIAVDKNGLMYFVDATMIRKVDQNGIISTLLGSNDLTAVRPLSCDSSMDVAQVRLEWPTDLAVNPMDNSLYVLENNVILRITENHQVSIIAGRPMHCQVPGIDYSLSKLAIHSALESASAIAISHTGVLYITETDEKKINRLRQVTTNGEICLLAGAASDCDCKNDVNCICYSGDDAYATDAILNSPSSLAVAPDGTIYIADLGNIRIRAVSKNKPVLNAFNQYEAASPGEQELYVFNADGIHQYTVSLVTGEYLYNFTYSADNDVTELIDNNGNSLKIRRDSSGMPRHLLMPDNQIITLTVGTNGGLKAVSTQNLELGLMTYDGNTGLLATKSDETGWTTFYDYDHEGRLTNVTRPTGVVTSLHREMEKSITIDIENSNRDDDVTVITNLSSVEASYTVVQDQVRNSYQLCNNGTLRVMYANGMAVSFHSEPHVLAGTITPTIGRCNISLPMENGLNSIEWRLRKEQIKGKVTIFGRKLRVHGRNLLSIDYDRNIRTEKIYDDHRKFTLRIIYDQVGRPFLWLPSSGLAAVNVSYFFNGRLAGLQRGAMSERTDIDKQGRIVSRMFADGKVWSYSYLDKSMVLLLQSQRQYIFEYDSSDRLHAVTMPSVARHSMSTHTSIGYIRNIYNPPESNASVIFDYSDDGRILKTSFLGTGRQVFYKYGKLSKLSEIVYDSTAVTFGYDETTGVLKMVNLQSGGFSCTIRYRKVGPLVDKQIYRFSEEGMINARFDYTYHDNSFRIASIKPVISETPLPVDLYRYDEISGKVEHFGKFGVIYYDINQIITTAVMTLSKHFDTHGRIKEVQYEMFRSLMYWMTVQYDSMGRVIKRELKLGPYANTTKYTYDYDGDGQLQSVAVNDRPTWRYSYDLNGNLHLLNPGNSARLMPLRYDLRDRITRLGDVQYKIDDDGYLCQRGSDIFEYNSKGLLTRAYNKASGWSVQYRYDGVGRRASYKTNLGHHLQYFYSDLHNPTRITHVYNHSNSEITSLYYDLQGHLFAMESSSGEEYYVASDNTGTPLAVYSINGLMIKQLQYTAYGEIYYDSNPDFQMVIGFHGGLYDPLTKLVHFTQRDYDVLAGRWTSPDYTMWRNVGKEPAPFNLYMFKNNNPLSNELDLKNYVTDVKSWLVMFGFQLSNIIPGFPRAKMYFVPPPYELSESQASENGQLITGVQQTTERHNQAFLALEGQVITKKLHASIREKAGHWFATTTPIIGKGIMFAIKEGRVTTGVSSIASEDSRKVASVLNNAYYLDKMHYSIEGKDTHYFVKIGAADGDLVTLGTTIGRKVLESGVNVTVSQPTLLVNGRTRRFTNIEFQYSTLLLSIRYGLTPDTLDEEKARVLDQAGQRALGTAWAKEQQKARDGREGSRLWTEGEKQQLLSTGRVQGYEGYYVLPVEQYPELADSSSNIQFLRQNEMGKR.

One can recognise a Teneurin N-terminal domain in the interval 1 to 375 (MDVKDRRHRS…KPSKYCSWKC (375 aa)). Over 1–379 (MDVKDRRHRS…YCSWKCAALS (379 aa)) the chain is Cytoplasmic. S90 and S124 each carry phosphoserine. The segment at 111 to 271 (TGSDADSDTE…HHHSSANSLN (161 aa)) is disordered. A compositionally biased stretch (polar residues) spans 141–155 (SSGLSSRENSALTLT). Position 155 is a phosphothreonine (T155). The residue at position 157 (S157) is a Phosphoserine. Basic and acidic residues predominate over residues 159 to 168 (NENKSDDDNG). Low complexity predominate over residues 174–188 (TSSSSLLPSAQLPSS). The span at 202 to 211 (DSNTSHQIMD) shows a compositional bias: polar residues. Residues 229-240 (SGPQQASSSGPP) are compositionally biased toward low complexity. The chain crosses the membrane as a helical span at residues 380 to 400 (AIAAALLLAILLAYFIAMHLL). Residues 401–2764 (GLNWQLQPAD…FLRQNEMGKR (2364 aa)) are Extracellular-facing. Residues N443 and N482 are each glycosylated (N-linked (GlcNAc...) asparagine). 8 EGF-like domains span residues 575–603 (DCPRNCHGNGECVSGLCHCFPGFLGADCA), 598–634 (LGADCAKAACPVLCSGNGQYSKGTCQCYSGWKGAECD), 636–668 (PMNQCIDPSCGGHGSCIDGNCVCAAGYKGEHCE), 669–701 (EVDCLDPTCSSHGVCVNGECLCSPGWGGLNCEL), 702–735 (ARVQCPDQCSGHGTYLPDSGLCSCDPNWMGPDCS), 737–765 (VCSVDCGTHGVCIGGACRCEEGWTGAACD), 768–796 (VCHPRCIEHGTCKDGKCECREGWNGEHCT), and 798–831 (DGCPDLCNGNGRCTLGQNSWQCVCQTGWRGPGCN). 22 disulfides stabilise this stretch: C576-C586, C580-C591, C593-C602, C611-C622, C624-C633, C640-C651, C645-C656, C658-C667, C672-C683, C677-C688, C690-C699, C710-C723, C725-C734, C738-C748, C742-C753, C755-C764, C769-C779, C773-C784, C786-C795, C800-C810, C804-C819, and C821-C830. N-linked (GlcNAc...) asparagine glycans are attached at residues N915, N938, and N1257. NHL repeat units follow at residues 1262–1306 (LELR…VKSL), 1332–1376 (ARCG…NGII), 1391–1442 (LSCD…IAGR), 1464–1491 (LESASAIAISHTGVLYITETDEKKINRL), and 1520–1563 (CYSG…VSKN). Residues 1573 to 1592 (YEAASPGEQELYVFNADGIH) form a YD 1 repeat. N1606 is a glycosylation site (N-linked (GlcNAc...) asparagine). YD repeat units lie at residues 1609-1629 (YSADNDVTELIDNNGNSLKIR), 1672-1691 (YDGNTGLLATKSDETGWTTF), and 1692-1714 (YDYDHEGRLTNVTRPTGVVTSLH). Residues N1702, N1739, N1763, N1797, and N1882 are each glycosylated (N-linked (GlcNAc...) asparagine). YD repeat units lie at residues 1885–1904 (YFFNGRLAGLQRGAMSERTD), 1926–1944 (YLDKSMVLLLQSQRQYIFE), 1945–1965 (YDSSDRLHAVTMPSVARHSMS), 1972–1989 (YIRNIYNPPESNASVIFD), 1990–2011 (YSDDGRILKTSFLGTGRQVFYK), 2012–2029 (YGKLSKLSEIVYDSTAVT), 2032–2052 (YDETTGVLKMVNLQSGGFSCT), 2055–2075 (YRKVGPLVDKQIYRFSEEGMI), 2083–2103 (YHDNSFRIASIKPVISETPLP), 2109–2126 (YDEISGKVEHFGKFGVIY), 2127–2153 (YDINQIITTAVMTLSKHFDTHGRIKEV), 2155–2168 (YEMFRSLMYWMTVQ), 2169–2192 (YDSMGRVIKRELKLGPYANTTKYT), 2195–2215 (YDGDGQLQSVAVNDRPTWRYS), 2216–2236 (YDLNGNLHLLNPGNSARLMPL), 2238–2258 (YDLRDRITRLGDVQYKIDDDG), 2270–2290 (YNSKGLLTRAYNKASGWSVQY), and 2292–2312 (YDGVGRRASYKTNLGHHLQYF). N-linked (GlcNAc...) asparagine glycosylation occurs at N1983. N-linked (GlcNAc...) asparagine glycosylation is present at N2187. N2327 is a glycosylation site (N-linked (GlcNAc...) asparagine). One copy of the YD 23 repeat lies at 2338 to 2379 (YDLQGHLFAMESSSGEEYYVASDNTGTPLAVYSINGLMIKQL). N-linked (GlcNAc...) asparagine glycosylation occurs at N2638.

It belongs to the tenascin family. Teneurin subfamily. In terms of assembly, homodimer; disulfide-linked. Heterodimer with either TENM1 or TENM3. May also form heterodimer with TENM4. Post-translationally, derives from the membrane form by proteolytic processing. In terms of processing, derives from the plasma membrane form by proteolytic cleavage and translocates to the nucleus. Homophilic binding of the C-terminal extracellular domain stimulates its proteolytic cleavage and release in the cytoplasmic. Is subjected to rapid degradation by the proteasome pathway. As to expression, expressed in the cortex, CA1, CA2, CA3, dentate gyrus and granular layer of the hippocampus. Expressed in the Purkinje cells and molecular layer of the cerebellum.

Its subcellular location is the cell membrane. The protein localises to the presynaptic cell membrane. It is found in the postsynaptic cell membrane. The protein resides in the endoplasmic reticulum. It localises to the golgi apparatus. Its subcellular location is the synapse. The protein localises to the cell projection. It is found in the dendritic spine. The protein resides in the filopodium. It localises to the growth cone. Its subcellular location is the nucleus. The protein localises to the PML body. In terms of biological role, involved in neural development, regulating the establishment of proper connectivity within the nervous system. Acts as a ligand of the ADGRL1 and ADGRL3 receptors that are expressed at the surface of adjacent cells. Promotes the formation of filopodia and enlarged growth cone in neuronal cells. Mediates axon guidance and homophilic and heterophilic cell-cell adhesion. May function as a cellular signal transducer. Induces gene transcription inhibition. In Mus musculus (Mouse), this protein is Teneurin-2 (Tenm2).